The sequence spans 309 residues: Acetolactate synthase small subunit, mitochondrial (309 aa).

The N-terminal 24 residues, 1–24 (MLRSLLQSGHRRVVASSCATMVRC), are a transit peptide targeting the mitochondrion. The ACT domain occupies 79–159 (VLNCLVQNEP…DYTNSEIIKR (81 aa)).

Belongs to the acetolactate synthase small subunit family. As to quaternary structure, the acetolactate synthase complex contains the catalytic regulatory subunit ILV2 and the regulatory small subunit ILV6.

It localises to the mitochondrion. The protein operates within amino-acid biosynthesis; L-isoleucine biosynthesis; L-isoleucine from 2-oxobutanoate: step 1/4. Its pathway is amino-acid biosynthesis; L-valine biosynthesis; L-valine from pyruvate: step 1/4. Regulatory subunit of mitochondrial acetolactate synthase, which catalyzes the first of a series of common steps in the biosynthesis of the branched-chain amino acids. Stimulates activity of the acetolactate synthase catalytic subunit ILV2 seven- to tenfold and confers sensitivity to inhibition by valine and activation by ATP. The sequence is that of Acetolactate synthase small subunit, mitochondrial (ILV6) from Saccharomyces cerevisiae (strain ATCC 204508 / S288c) (Baker's yeast).